The primary structure comprises 475 residues: Ankyrin repeat, SAM and basic leucine zipper domain-containing protein 1 (475 aa).

Residues Ser17, Ser18, and Ser20 each carry the phosphoserine modification. ANK repeat units follow at residues 45–74 (EKNE…SVDT), 78–107 (YGWT…NASF), 110–144 (DKQT…DPNM), 148–177 (RLMT…DVNA), 181–210 (NGYT…NKMI), and 214–243 (DGKT…PLEG). Residues 272–334 (SYTAFGDLEI…KILAALKELE (63 aa)) enclose the SAM domain.

Interacts with DDX4, PIWIL1, RANBP9 and TDRD1.

It localises to the cytoplasm. Functionally, plays a central role during spermatogenesis by repressing transposable elements and preventing their mobilization, which is essential for the germline integrity. Acts via the piRNA metabolic process, which mediates the repression of transposable elements during meiosis by forming complexes composed of piRNAs and Piwi proteins and governs the methylation and subsequent repression of transposons. Its association with pi-bodies suggests a participation in the primary piRNAs metabolic process. Required prior to the pachytene stage to facilitate the production of multiple types of piRNAs, including those associated with repeats involved in the regulation of retrotransposons. May act by mediating protein-protein interactions during germ cell maturation. The sequence is that of Ankyrin repeat, SAM and basic leucine zipper domain-containing protein 1 (ASZ1) from Atelerix albiventris (Middle-African hedgehog).